Here is a 281-residue protein sequence, read N- to C-terminus: Penicillin-insensitive murein endopeptidase (281 aa).

Positions 1-24 are cleaved as a signal peptide; it reads MKQGLIGVLALALGATLLSSAVWA. 3 disulfides stabilise this stretch: Cys49–Cys270, Cys192–Cys240, and Cys221–Cys228. Zn(2+)-binding residues include His115, His118, Asp125, and His216. Residues 230 to 271 form a disordered region; that stretch reads EQSEPPIGDGCGAELTSWFQPKQPSSEAPEKTTPPPLPPSCQ. A compositionally biased stretch (polar residues) spans 246–255; the sequence is SWFQPKQPSS.

Belongs to the peptidase M74 family. As to quaternary structure, dimer. The cofactor is Zn(2+).

It localises to the periplasm. Murein endopeptidase that cleaves the D-alanyl-meso-2,6-diamino-pimelyl amide bond that connects peptidoglycan strands. Likely plays a role in the removal of murein from the sacculus. The polypeptide is Penicillin-insensitive murein endopeptidase (mepA) (Pectobacterium atrosepticum (strain SCRI 1043 / ATCC BAA-672) (Erwinia carotovora subsp. atroseptica)).